Here is a 354-residue protein sequence, read N- to C-terminus: Kelch domain-containing protein 8B (354 aa).

Kelch repeat units lie at residues 1–31 (MSAG…HQDE), 32–79 (HLLV…VLGK), 81–127 (VLVV…ERDG), 128–175 (MVYA…LHGN), 176–222 (KIYV…MAEG), 224–281 (VFSL…SLGG), 282–329 (HIVA…QAGP), and 331–354 (LFVI…RDGV).

The protein resides in the cytoplasm. It is found in the midbody. Functionally, involved in pinching off the separated nuclei at the cleavage furrow and in cytokinesis. Required for mitotic integrity and maintenance of chromosomal stability. Protects cells against mitotic errors, centrosomal amplification, micronucleus formation and aneuploidy. Plays a key role of midbody function involving abscission of the daughter cells during cytokinesis and appropriate chromosomal and nuclear segregation into the daughter cells. This is Kelch domain-containing protein 8B (KLHDC8B) from Pongo abelii (Sumatran orangutan).